A 725-amino-acid chain; its full sequence is Glyoxysomal fatty acid beta-oxidation multifunctional protein MFP-a (725 aa).

Glu119 (nucleophile) is an active-site residue. Residue Glu139 is the Proton acceptor of the active site. The Microbody targeting signal signature appears at 723–725; sequence SRL.

In the N-terminal section; belongs to the enoyl-CoA hydratase/isomerase family. This sequence in the central section; belongs to the 3-hydroxyacyl-CoA dehydrogenase family.

Its subcellular location is the glyoxysome. The catalysed reaction is a (3S)-3-hydroxyacyl-CoA = a (2E)-enoyl-CoA + H2O. It carries out the reaction a 4-saturated-(3S)-3-hydroxyacyl-CoA = a (3E)-enoyl-CoA + H2O. The enzyme catalyses a (3Z)-enoyl-CoA = a 4-saturated (2E)-enoyl-CoA. It catalyses the reaction a (3E)-enoyl-CoA = a 4-saturated (2E)-enoyl-CoA. The catalysed reaction is (3S)-3-hydroxybutanoyl-CoA = (3R)-3-hydroxybutanoyl-CoA. It carries out the reaction a (3S)-3-hydroxyacyl-CoA + NAD(+) = a 3-oxoacyl-CoA + NADH + H(+). It participates in lipid metabolism; fatty acid beta-oxidation. This Brassica napus (Rape) protein is Glyoxysomal fatty acid beta-oxidation multifunctional protein MFP-a.